Consider the following 234-residue polypeptide: Transcription factor bHLH160 (234 aa).

Polar residues predominate over residues 1-13; sequence MSSQPNHQTSISS. A disordered region spans residues 1–67; it reads MSSQPNHQTS…GAAKKQDHNA (67 aa). Residues 27–37 show a composition bias toward basic and acidic residues; the sequence is IVEKESAEKDT. Positions 60–115 constitute a bHLH domain; it reads AKKQDHNAKERLRRMRLHASYLTLGTLLPDHSSSSSKKKWSAPSIIDNVITYIPKL.

Belongs to the bHLH protein family.

The protein resides in the nucleus. This chain is Transcription factor bHLH160, found in Arabidopsis thaliana (Mouse-ear cress).